A 646-amino-acid polypeptide reads, in one-letter code: Peptidylprolyl isomerase domain and WD repeat-containing protein 1 (646 aa).

Residues 1–30 (MAAESGSDFQQRRRRRRDPEEPEKTELSER) form a disordered region. At Ala-2 the chain carries N-acetylalanine. Over residues 17–30 (RDPEEPEKTELSER) the composition is skewed to basic and acidic residues. WD repeat units lie at residues 80-118 (ASMY…FWKK), 124-162 (EFVK…VFDV), 168-208 (INML…IYDG), 213-252 (QPLH…YWTG), 271-309 (TDLY…IFRF), 345-386 (AVER…VETN), and 401-453 (MQLA…MFTK). A compositionally biased stretch (basic and acidic residues) spans 455–478 (EPEDTKSADSDRDVFNEKPSKEEV). Residues 455 to 490 (EPEDTKSADSDRDVFNEKPSKEEVMAATQAEGPKRV) form a disordered region. One can recognise a PPIase cyclophilin-type domain in the interval 490-645 (VSDSAIIHTS…EDVSIINITV (156 aa)).

It belongs to the cyclophilin-type PPIase family. PPIL1 subfamily. As to quaternary structure, identified in the spliceosome C complex.

It is found in the nucleus. The enzyme catalyses [protein]-peptidylproline (omega=180) = [protein]-peptidylproline (omega=0). With respect to regulation, inhibited by cyclosporin A (CsA). Functionally, PPIase that catalyzes the cis-trans isomerization of proline imidic peptide bonds in oligopeptides and may therefore assist protein folding. May be involved in pre-mRNA splicing. The sequence is that of Peptidylprolyl isomerase domain and WD repeat-containing protein 1 from Homo sapiens (Human).